The chain runs to 169 residues: Probable inosine/xanthosine triphosphatase (169 aa).

Substrate is bound at residue serine 7–lysine 12. Position 35 (glutamate 35) interacts with Mg(2+).

Belongs to the YjjX NTPase family. As to quaternary structure, homodimer. It depends on Mg(2+) as a cofactor. Requires Mn(2+) as cofactor.

The enzyme catalyses XTP + H2O = XDP + phosphate + H(+). It carries out the reaction ITP + H2O = IDP + phosphate + H(+). Its function is as follows. Phosphatase that hydrolyzes non-canonical purine nucleotides such as XTP and ITP to their respective diphosphate derivatives. Probably excludes non-canonical purines from DNA/RNA precursor pool, thus preventing their incorporation into DNA/RNA and avoiding chromosomal lesions. In Sulfurisphaera tokodaii (strain DSM 16993 / JCM 10545 / NBRC 100140 / 7) (Sulfolobus tokodaii), this protein is Probable inosine/xanthosine triphosphatase.